Reading from the N-terminus, the 183-residue chain is CASP-like protein UU1 (183 aa).

At Met1–Pro33 the chain is on the cytoplasmic side. A helical membrane pass occupies residues Ala34–Ala54. The Extracellular segment spans residues Asp55–Ala72. The chain crosses the membrane as a helical span at residues Ile73 to Ile93. At Arg94 to Thr118 the chain is on the cytoplasmic side. Residues Tyr119–Gly139 traverse the membrane as a helical segment. Topologically, residues Ser140 to Thr156 are extracellular. N-linked (GlcNAc...) asparagine glycosylation occurs at Asn141. Residues Phe157–Val177 form a helical membrane-spanning segment. Residues Lys178–Ala183 are Cytoplasmic-facing.

It belongs to the Casparian strip membrane proteins (CASP) family. As to quaternary structure, homodimer and heterodimers.

It localises to the cell membrane. The polypeptide is CASP-like protein UU1 (Selaginella moellendorffii (Spikemoss)).